Reading from the N-terminus, the 278-residue chain is MNNILSEEVLNVTDFTTSRQLTLWKREDLQSPQLDDVAEEVPVALVYNGISHVVMMASPKDLTHFAMGFSLSEGIIDSPREIYGMDVVPSCNGLEVQIDLSSRRFMGLKARRRALAGRTGCGVCGVEQLNDIGKPVQPLPFSQTFNLGNLDRALKHLNDFQPTGKLTGCTHAAAWVMPSGELAGGHEDVGRHVALDKLLGRRATEGEEWRQGAALVSSRASYEMVQKSAMCGVEILFAVSAATTLAVEVAERCNLTLVGFCKPGRATIYTHPQRLIAD.

C121 functions as the Cysteine persulfide intermediate in the catalytic mechanism. Residue 260–265 coordinates Mo-bis(molybdopterin guanine dinucleotide); sequence FCKPGR.

This sequence belongs to the FdhD family.

The protein resides in the cytoplasm. Required for formate dehydrogenase (FDH) activity. Acts as a sulfur carrier protein that transfers sulfur from IscS to the molybdenum cofactor prior to its insertion into FDH. The polypeptide is Sulfur carrier protein FdhD (Salmonella newport (strain SL254)).